The following is a 565-amino-acid chain: Potassium-transporting ATPase potassium-binding subunit (565 aa).

Helical transmembrane passes span 6-26 (LMLL…LGSL), 63-83 (LLAI…LLMA), 132-152 (GLGV…FALI), 175-195 (LYVL…QGVI), 250-270 (LSNL…CFAF), 283-303 (LLWT…YAEL), 327-347 (FGIL…CGAV), 354-374 (FTAL…VVFG), 379-399 (GLYG…LMIG), 418-438 (ALAI…ALLC), 483-503 (LLLA…VMAI), and 524-544 (GALF…LTFI).

This sequence belongs to the KdpA family. In terms of assembly, the system is composed of three essential subunits: KdpA, KdpB and KdpC.

It is found in the cell inner membrane. Functionally, part of the high-affinity ATP-driven potassium transport (or Kdp) system, which catalyzes the hydrolysis of ATP coupled with the electrogenic transport of potassium into the cytoplasm. This subunit binds the periplasmic potassium ions and delivers the ions to the membrane domain of KdpB through an intramembrane tunnel. In Edwardsiella ictaluri (strain 93-146), this protein is Potassium-transporting ATPase potassium-binding subunit.